The chain runs to 254 residues: Very-long-chain (3R)-3-hydroxyacyl-CoA dehydratase 2 (254 aa).

The span at 1 to 10 (MAAAAATAAT) shows a compositional bias: low complexity. A disordered region spans residues 1 to 34 (MAAAAATAATKGNGGGSGRVGAGDSSGARKKKGP). Alanine 2 bears the N-acetylalanine mark. At 2-41 (AAAAATAATKGNGGGSGRVGAGDSSGARKKKGPGPVATAY) the chain is on the cytoplasmic side. The span at 12 to 21 (GNGGGSGRVG) shows a compositional bias: gly residues. Residues 42 to 60 (LVIYNVVMTAGWLVIAVGL) traverse the membrane as a helical segment. At 61–79 (VRAYLAKGSYHSLYYSIER) the chain is on the lumenal side. Residues 80–97 (PLKFFQTGALLEILHCAI) form a helical membrane-spanning segment. The Cytoplasmic portion of the chain corresponds to 98-107 (GIVPSSVVLT). The helical transmembrane segment at 108-125 (SFQVMSRVFLIWAVTHSV) threads the bilayer. The Lumenal portion of the chain corresponds to 126 to 130 (KEVQS). Residues 131–146 (EDSVLLFVIAWTITEI) form a helical membrane-spanning segment. Over 147-169 (IRYSFYTFSLLNHLPYIIKWARY) the chain is Cytoplasmic. A helical membrane pass occupies residues 170–187 (TLFIVLYPMGVTGELLTI). Residues tyrosine 176 and glutamate 183 contribute to the active site. At 188–217 (YAALPFVRQAGLYSISLPNKYNFSFDYHAF) the chain is on the lumenal side. Residues 198–214 (GLYSISLPNKYNFSFDY) are may be involved in interaction with TECR. Residue asparagine 209 is glycosylated (N-linked (GlcNAc...) asparagine). The chain crosses the membrane as a helical span at residues 218 to 235 (LILIMISYIPLFPQLYFH). The Cytoplasmic portion of the chain corresponds to 236-254 (MIHQRRKVLSHTEEHKKFE).

It belongs to the very long-chain fatty acids dehydratase HACD family. In terms of assembly, may interact with enzymes of the ELO family (including ELOVL1); with those enzymes that mediate condensation, the first of the four steps of the reaction cycle responsible for fatty acids elongation, may be part of a larger fatty acids elongase complex. Interacts with BCAP31. Interacts with TECR.

Its subcellular location is the endoplasmic reticulum membrane. The enzyme catalyses a very-long-chain (3R)-3-hydroxyacyl-CoA = a very-long-chain (2E)-enoyl-CoA + H2O. It carries out the reaction (3R)-hydroxyhexadecanoyl-CoA = (2E)-hexadecenoyl-CoA + H2O. The catalysed reaction is (3R)-hydroxyoctadecanoyl-CoA = (2E)-octadecenoyl-CoA + H2O. It catalyses the reaction (3R)-hydroxyeicosanoyl-CoA = (2E)-eicosenoyl-CoA + H2O. The enzyme catalyses (3R)-hydroxydocosanoyl-CoA = (2E)-docosenoyl-CoA + H2O. It carries out the reaction (3R)-hydroxytetracosanoyl-CoA = (2E)-tetracosenoyl-CoA + H2O. The catalysed reaction is (3R)-hydroxyhexacosanoyl-CoA = (2E)-hexacosenoyl-CoA + H2O. Its pathway is lipid metabolism; fatty acid biosynthesis. Catalyzes the third of the very long-chain fatty acids (VLCFA) elongation four-step cycle (condensation, reduction, dehydration, and reduction). This endoplasmic reticulum-elongation process is characterized by the addition of two carbons to the lipid chain through each cycle. This enzyme catalyzes the dehydration of the 3-hydroxyacyl-CoA intermediate into trans-2,3-enoyl-CoA, within each cycle of elongation. Therefore, it participates in the production of various VLCFAs involved in multiple biological processes as precursors of membrane lipids and lipid mediators. The polypeptide is Very-long-chain (3R)-3-hydroxyacyl-CoA dehydratase 2 (Mus musculus (Mouse)).